We begin with the raw amino-acid sequence, 438 residues long: Tol-Pal system protein TolB (438 aa).

A signal peptide spans 1 to 35 (MITMKNILKLRATGLLLLLLLMISVLGNGIGQAMA).

This sequence belongs to the TolB family. The Tol-Pal system is composed of five core proteins: the inner membrane proteins TolA, TolQ and TolR, the periplasmic protein TolB and the outer membrane protein Pal. They form a network linking the inner and outer membranes and the peptidoglycan layer.

The protein resides in the periplasm. Its function is as follows. Part of the Tol-Pal system, which plays a role in outer membrane invagination during cell division and is important for maintaining outer membrane integrity. The chain is Tol-Pal system protein TolB from Desulfotalea psychrophila (strain LSv54 / DSM 12343).